The primary structure comprises 83 residues: MKASMFLALAGLVLLFVVDYASESEEKEFPIELLSKIFAVDVFKGEERGCKGFDDSCTPGKNECCPNHACSNKHKWCKVYLGK.

The signal sequence occupies residues 1–21 (MKASMFLALAGLVLLFVVDYA). A propeptide spanning residues 22–48 (SESEEKEFPIELLSKIFAVDVFKGEER) is cleaved from the precursor. 3 cysteine pairs are disulfide-bonded: cysteine 50–cysteine 65, cysteine 57–cysteine 70, and cysteine 64–cysteine 77. Residue leucine 81 is modified to Leucine amide.

This sequence belongs to the neurotoxin 10 (Hwtx-1) family. 15 (Hntx-3) subfamily. In terms of assembly, monomer. In terms of tissue distribution, expressed by the venom gland.

Its subcellular location is the secreted. Its function is as follows. Lethal neurotoxin. Selectively blocks tetrodotoxin-sensitive voltage-gated sodium channels (Nav). Does not affect tetrodotoxin-resistant voltage-gated sodium channels or calcium channels. This Cyriopagopus hainanus (Chinese bird spider) protein is Mu-theraphotoxin-Hhn2k.